Here is a 265-residue protein sequence, read N- to C-terminus: Ribosomal RNA small subunit methyltransferase G (265 aa).

Gly75, Leu80, and Arg145 together coordinate S-adenosyl-L-methionine. Residues 212 to 265 (RAVRSSQRTRAESRGGRGDGERHDGRQVRRTSRDSLRSREVGRDQPTRGQSRST) form a disordered region. Positions 220–257 (TRAESRGGRGDGERHDGRQVRRTSRDSLRSREVGRDQP) are enriched in basic and acidic residues.

It belongs to the methyltransferase superfamily. RNA methyltransferase RsmG family.

The protein resides in the cytoplasm. Its function is as follows. Specifically methylates the N7 position of guanine in position 518 of 16S rRNA. The polypeptide is Ribosomal RNA small subunit methyltransferase G (Frankia casuarinae (strain DSM 45818 / CECT 9043 / HFP020203 / CcI3)).